A 213-amino-acid polypeptide reads, in one-letter code: A-type ATP synthase subunit D (213 aa).

It belongs to the V-ATPase D subunit family. As to quaternary structure, has multiple subunits with at least A(3), B(3), C, D, E, F, H, I and proteolipid K(x).

Its subcellular location is the cell membrane. Functionally, component of the A-type ATP synthase that produces ATP from ADP in the presence of a proton gradient across the membrane. The sequence is that of A-type ATP synthase subunit D from Thermoplasma acidophilum (strain ATCC 25905 / DSM 1728 / JCM 9062 / NBRC 15155 / AMRC-C165).